Here is a 170-residue protein sequence, read N- to C-terminus: Large ribosomal subunit protein uL16 (170 aa).

The protein belongs to the universal ribosomal protein uL16 family.

The sequence is that of Large ribosomal subunit protein uL16 from Methanospirillum hungatei JF-1 (strain ATCC 27890 / DSM 864 / NBRC 100397 / JF-1).